A 315-amino-acid polypeptide reads, in one-letter code: Acyl transferase (315 aa).

Catalysis depends on charge relay system residues S116, D213, and H243.

The protein belongs to the LuxD family.

It participates in lipid metabolism; fatty acid reduction for biolumincescence. Its function is as follows. Acyl transferase is part of the fatty acid reductase system required for aldehyde biosynthesis; it produces fatty acids for the luminescent reaction. This chain is Acyl transferase, found in Photobacterium leiognathi.